Here is a 225-residue protein sequence, read N- to C-terminus: Cytidylate kinase (225 aa).

12 to 20 lines the ATP pocket; sequence GPSGAGKGT.

Belongs to the cytidylate kinase family. Type 1 subfamily.

It is found in the cytoplasm. It carries out the reaction CMP + ATP = CDP + ADP. The catalysed reaction is dCMP + ATP = dCDP + ADP. The sequence is that of Cytidylate kinase from Stenotrophomonas maltophilia (strain K279a).